A 324-amino-acid chain; its full sequence is Glyoxylate/hydroxypyruvate reductase B (324 aa).

Catalysis depends on residues Arg-237 and Glu-266. Residue His-285 is the Proton donor of the active site.

Belongs to the D-isomer specific 2-hydroxyacid dehydrogenase family. GhrB subfamily. As to quaternary structure, homodimer.

The protein localises to the cytoplasm. It catalyses the reaction glycolate + NADP(+) = glyoxylate + NADPH + H(+). The catalysed reaction is (R)-glycerate + NAD(+) = 3-hydroxypyruvate + NADH + H(+). The enzyme catalyses (R)-glycerate + NADP(+) = 3-hydroxypyruvate + NADPH + H(+). Catalyzes the NADPH-dependent reduction of glyoxylate and hydroxypyruvate into glycolate and glycerate, respectively. In Salmonella agona (strain SL483), this protein is Glyoxylate/hydroxypyruvate reductase B.